Consider the following 461-residue polypeptide: LL-diaminopimelate aminotransferase, chloroplastic (461 aa).

The transit peptide at 1 to 45 (MSSTHQLVSSMISSSSSTFLAPSNFNLRTRNACLPMAKRVNTCKC) directs the protein to the chloroplast. 2 residues coordinate substrate: Tyr72 and Gly99. Residues Tyr129, 163-164 (AK), Tyr187, Asn244, Tyr275, and 302-304 (SFS) each bind pyridoxal 5'-phosphate. Residues Lys164, Tyr187, and Asn244 each coordinate substrate. Lys305 bears the N6-(pyridoxal phosphate)lysine mark. Pyridoxal 5'-phosphate-binding residues include Arg313 and Asn344. The substrate site is built by Asn344 and Arg439.

This sequence belongs to the class-I pyridoxal-phosphate-dependent aminotransferase family. LL-diaminopimelate aminotransferase subfamily. Homodimer. Requires pyridoxal 5'-phosphate as cofactor. Highly expressed in seedlings, roots, stems, flowers and leaves. Lower expression in siliques.

It localises to the plastid. The protein localises to the chloroplast. The catalysed reaction is (2S,6S)-2,6-diaminopimelate + 2-oxoglutarate = (S)-2,3,4,5-tetrahydrodipicolinate + L-glutamate + H2O + H(+). It participates in amino-acid biosynthesis; L-lysine biosynthesis via DAP pathway; LL-2,6-diaminopimelate from (S)-tetrahydrodipicolinate (aminotransferase route): step 1/1. Its function is as follows. Required for lysine biosynthesis. Catalyzes the direct conversion of tetrahydrodipicolinate to LL-diaminopimelate, a reaction that requires three enzymes in E.coli. Not active with meso-diaminopimelate, lysine or ornithine as substrates. This is LL-diaminopimelate aminotransferase, chloroplastic (DAP) from Arabidopsis thaliana (Mouse-ear cress).